The sequence spans 254 residues: Glutamate racemase (254 aa).

Residues 7-8 and 39-40 each bind substrate; these read DS and YG. Residue cysteine 70 is the Proton donor/acceptor of the active site. Residues 71–72 and glutamate 147 contribute to the substrate site; that span reads NT. Cysteine 178 functions as the Proton donor/acceptor in the catalytic mechanism. Position 179 to 180 (179 to 180) interacts with substrate; that stretch reads TH.

It belongs to the aspartate/glutamate racemases family. As to quaternary structure, homodimer.

The enzyme catalyses L-glutamate = D-glutamate. It functions in the pathway cell wall biogenesis; peptidoglycan biosynthesis. Provides the (R)-glutamate required for cell wall biosynthesis. Converts L- or D-glutamate to D- or L-glutamate, respectively, but not other amino acids such as alanine, aspartate, and glutamine. This is Glutamate racemase from Aquifex pyrophilus.